The primary structure comprises 135 residues: Protein cornichon homolog 1 (135 aa).

A run of 3 helical transmembrane segments spans residues 2 to 22 (VFVW…VIYQ), 51 to 71 (FVLQ…AMFL), and 111 to 131 (IVGL…TVLL).

Belongs to the cornichon family. Interacts with HKT1;3.

The protein resides in the endoplasmic reticulum membrane. The protein localises to the golgi apparatus membrane. Acts as a cargo receptor necessary for the transportation of the cation transporter HKT1;3 and possibly other secretory proteins from the endoplasmic reticulum (ER) in COPII-coated vesicles targeted to the Golgi apparatus. The chain is Protein cornichon homolog 1 from Oryza sativa subsp. japonica (Rice).